The chain runs to 76 residues: DNA-directed RNA polymerase subunit omega (76 aa).

It belongs to the RNA polymerase subunit omega family. As to quaternary structure, the RNAP catalytic core consists of 2 alpha, 1 beta, 1 beta' and 1 omega subunit. When a sigma factor is associated with the core the holoenzyme is formed, which can initiate transcription.

It catalyses the reaction RNA(n) + a ribonucleoside 5'-triphosphate = RNA(n+1) + diphosphate. Promotes RNA polymerase assembly. Latches the N- and C-terminal regions of the beta' subunit thereby facilitating its interaction with the beta and alpha subunits. In Staphylococcus carnosus (strain TM300), this protein is DNA-directed RNA polymerase subunit omega.